The sequence spans 239 residues: 7-cyano-7-deazaguanine synthase (239 aa).

13 to 23 (LSGGLDSMVTA) is an ATP binding site. Residues Cys-193, Cys-203, Cys-206, and Cys-209 each coordinate Zn(2+).

This sequence belongs to the QueC family. It depends on Zn(2+) as a cofactor.

The catalysed reaction is 7-carboxy-7-deazaguanine + NH4(+) + ATP = 7-cyano-7-deazaguanine + ADP + phosphate + H2O + H(+). Its pathway is purine metabolism; 7-cyano-7-deazaguanine biosynthesis. Its function is as follows. Catalyzes the ATP-dependent conversion of 7-carboxy-7-deazaguanine (CDG) to 7-cyano-7-deazaguanine (preQ(0)). The chain is 7-cyano-7-deazaguanine synthase from Erythrobacter litoralis (strain HTCC2594).